A 423-amino-acid chain; its full sequence is TPR repeat-containing protein YpiA (423 aa).

TPR repeat units lie at residues 33-66 (DEDK…YPNE), 67-100 (TELT…DPSY), 135-168 (PVID…QSEI), 171-204 (VNVH…NPDP), 238-271 (TSLY…DEYN), 272-305 (KELF…DPGF), 306-339 (VEAL…GEED), 340-373 (PKYN…YRED), and 374-407 (RDFL…DGAN).

Interacts with the RNA polymerase core.

This Bacillus subtilis (strain 168) protein is TPR repeat-containing protein YpiA (ypiA).